The sequence spans 678 residues: Methionine--tRNA ligase (678 aa).

The short motif at 14–24 is the 'HIGH' region element; it reads PYANGSIHLGH. Zn(2+) is bound by residues cysteine 145, cysteine 148, cysteine 158, and cysteine 161. A 'KMSKS' region motif is present at residues 331–335; sequence KMSKS. An ATP-binding site is contributed by lysine 334. A tRNA-binding domain is found at 576–678; sequence AFAAVDLRIA…SGAKPGQRVK (103 aa).

This sequence belongs to the class-I aminoacyl-tRNA synthetase family. MetG type 1 subfamily. As to quaternary structure, homodimer. It depends on Zn(2+) as a cofactor.

It localises to the cytoplasm. It carries out the reaction tRNA(Met) + L-methionine + ATP = L-methionyl-tRNA(Met) + AMP + diphosphate. Is required not only for elongation of protein synthesis but also for the initiation of all mRNA translation through initiator tRNA(fMet) aminoacylation. The chain is Methionine--tRNA ligase from Ectopseudomonas mendocina (strain ymp) (Pseudomonas mendocina).